Reading from the N-terminus, the 266-residue chain is Glucosamine-6-phosphate deaminase (266 aa).

The active-site Proton acceptor; for enolization step is aspartate 72. The active-site For ring-opening step is the aspartate 141. Histidine 143 functions as the Proton acceptor; for ring-opening step in the catalytic mechanism. The active-site For ring-opening step is the glutamate 148.

Belongs to the glucosamine/galactosamine-6-phosphate isomerase family. NagB subfamily. Homohexamer.

It catalyses the reaction alpha-D-glucosamine 6-phosphate + H2O = beta-D-fructose 6-phosphate + NH4(+). The protein operates within amino-sugar metabolism; N-acetylneuraminate degradation; D-fructose 6-phosphate from N-acetylneuraminate: step 5/5. Allosterically activated by N-acetylglucosamine 6-phosphate (GlcNAc6P). Functionally, catalyzes the reversible isomerization-deamination of glucosamine 6-phosphate (GlcN6P) to form fructose 6-phosphate (Fru6P) and ammonium ion. The sequence is that of Glucosamine-6-phosphate deaminase from Salmonella arizonae (strain ATCC BAA-731 / CDC346-86 / RSK2980).